The sequence spans 216 residues: GTPase IMAP family member GIMD1 (216 aa).

In terms of domain architecture, AIG1-type G spans K5 to T216. GTP is bound by residues G14–S22, S35, and H147–E149.

Belongs to the TRAFAC class TrmE-Era-EngA-EngB-Septin-like GTPase superfamily. AIG1/Toc34/Toc159-like paraseptin GTPase family. IAN subfamily.

The sequence is that of GTPase IMAP family member GIMD1 (Gimd1) from Rattus norvegicus (Rat).